Reading from the N-terminus, the 1121-residue chain is MDPFTEKLLERTRARRENLQRKMAERPTAVARSAPHAKRGREPLSEASNQQQPLPGGEEKSCTKPSPSKKRCSDKIEVGAPDLENTEPIDVAKPCSPMPAPRQAKPPAPAAISESVAAPAALLSADRGLNSGSEASATSSVKTRMQRLAEQRRHWDSDLTDDVSESSYFAPVPTEDKAASPSKPPISNASATPVGRRGRLANLAATICSWEDDVSHSSAKQNSVQEQPGTACLSKSSSASGASASINSSSVQQEATCCSPRDGNASVRKDPSSNAAHGPLLSASVSSSVKASSPVTAATFITENREAQNPELLHKTASPLKTEARKPCEKPTLSQGAQPKEEANREVCLQSQSKDKLATPGGRGIKPFLERFGERCQEHSKESPSYRASHKTPNITPNTKAIQERLFKQNTCSSTTHLAQQLKQEREKELACLRGRLDKGNLWSAEKNEKSRSKHLETKQEVHCQNTPLKKHQTVASTPLTSVTDKVAENEPAVKLSSTEPAGSTESEMTKSSPLKITLFLEEEKSLKVASDLEVEQNTEAVREVEMSVDDEDINSSRVINDIFSDVLEEGELDVEKSQEEMDQVGAENSEEQEDALNISSMSLLAPLAQTVGVVSLENVISSPPSELRDSNLSAASPKPGKFQRTRVPRAESADSLGSEDRDLLYSIDAYRSQRFKETERPSIKQVIVRKEDVTSKLGEKKNVFSGQVNIKQKMQELNNDINLQQTVIYQASQALNCCVDEEHGKGSLEEAEAERLLLIATEKRALLIDELNKLKSEGPQRRNKTSVISQSEFAPSKGSVTLSEICLPLKADFVCSTAQKTDASNYYYLIMLKAGAEQMVATPLASTANSLSGDALTFPTTFTLHDVSNDFEINIEVYSLVQKKDSLGPDKKKKASKSKAITPKRLLTSITSKSSLHSSVMASPGGLGAVRTSNFTLVGSHTLSLSSVGDTKFALDKVPFLSPLEGHICLKISCQVNSAVEEKGFLTIFEDVSGFGAWHRRWCVLSGNCISYWTYPDDERRKNPIGRINLANCISHQIEPANREFCARRNTLELITVRPQREDDRETLVSQCRDTLCVTKNWLSADTKEERDLWMQKLNQVIVDIRLWQPDACYKPVGKP.

Position 1 is an N-acetylmethionine (methionine 1). A compositionally biased stretch (basic and acidic residues) spans 1-25; sequence MDPFTEKLLERTRARRENLQRKMAE. The interval 1–45 is required for ubiquitination; it reads MDPFTEKLLERTRARRENLQRKMAERPTAVARSAPHAKRGREPLS. Disordered regions lie at residues 1–113, 125–196, and 212–402; these read MDPF…AAIS, ADRG…PVGR, and DDVS…TKAI. The interaction with CD2AP stretch occupies residues 1–154; it reads MDPFTEKLLE…MQRLAEQRRH (154 aa). The tract at residues 1–228 is nuclear localization; that stretch reads MDPFTEKLLE…AKQNSVQEQP (228 aa). A phosphoserine mark is found at serine 73 and serine 96. The segment covering 96–109 has biased composition (pro residues); that stretch reads SPMPAPRQAKPPAP. The segment covering 130–143 has biased composition (polar residues); sequence NSGSEASATSSVKT. Positions 147 to 157 are enriched in basic and acidic residues; the sequence is RLAEQRRHWDS. Residue serine 180 is modified to Phosphoserine. Threonine 192 is subject to Phosphothreonine. Polar residues predominate over residues 216 to 228; the sequence is HSSAKQNSVQEQP. A phosphoserine mark is found at serine 223, serine 250, and serine 259. Residues 229–671 form an interaction with F-actin region; that stretch reads GTACLSKSSS…RDLLYSIDAY (443 aa). Positions 234 to 250 are enriched in low complexity; it reads SKSSSASGASASINSSS. Residues 282-298 are compositionally biased toward low complexity; it reads SASVSSSVKASSPVTAA. Over residues 303 to 314 the composition is skewed to basic and acidic residues; sequence ENREAQNPELLH. Threonine 316 carries the phosphothreonine modification. A phosphoserine mark is found at serine 318 and serine 334. Threonine 359 carries the phosphothreonine modification. Lysine 366 carries the post-translational modification N6-acetyllysine. Basic and acidic residues predominate over residues 368 to 384; sequence FLERFGERCQEHSKESP. The span at 391–401 shows a compositional bias: polar residues; it reads KTPNITPNTKA. A phosphothreonine mark is found at threonine 392 and threonine 396. Residues serine 414 and serine 444 each carry the phosphoserine modification. The segment at 490 to 511 is disordered; the sequence is NEPAVKLSSTEPAGSTESEMTK. Residues 496 to 511 are compositionally biased toward polar residues; that stretch reads LSSTEPAGSTESEMTK. Serine 513, serine 548, and serine 556 each carry phosphoserine. Positions 564–599 form a coiled coil; sequence FSDVLEEGELDVEKSQEEMDQVGAENSEEQEDALNI. Residues 623-635 show a composition bias toward polar residues; sequence SPPSELRDSNLSA. Residues 623–656 are disordered; the sequence is SPPSELRDSNLSAASPKPGKFQRTRVPRAESADS. Phosphoserine is present on residues serine 637, serine 653, serine 656, and serine 659. Tyrosine 666 is modified (phosphotyrosine). Residues serine 673, serine 683, serine 787, and serine 924 each carry the phosphoserine modification. The interval 725–1121 is localization to the cleavage furrow; that stretch reads QQTVIYQASQ…DACYKPVGKP (397 aa). In terms of domain architecture, PH spans 980-1104; it reads AVEEKGFLTI…WMQKLNQVIV (125 aa).

Interacts with F-actin. Interacts with CD2AP. May interact with RHOA. Interacts with FZR1/CDH1 during mitotic exit. Post-translationally, phosphorylated during mitosis. Ubiquitinated, and this requires FZR1/CDH1.

It localises to the nucleus. Its subcellular location is the cytoplasm. The protein resides in the cytoskeleton. It is found in the cell cortex. The protein localises to the cell projection. It localises to the bleb. Its function is as follows. Required for cytokinesis. Essential for the structural integrity of the cleavage furrow and for completion of cleavage furrow ingression. Plays a role in bleb assembly during metaphase and anaphase of mitosis. May play a significant role in podocyte cell migration. In Mus musculus (Mouse), this protein is Anillin (Anln).